A 169-amino-acid polypeptide reads, in one-letter code: Lutropin/choriogonadotropin subunit beta (169 aa).

The N-terminal stretch at 1-20 is a signal peptide; that stretch reads METLQGLLLWMLLSVGGVWA. 6 cysteine pairs are disulfide-bonded: C29-C77, C43-C92, C46-C130, C54-C108, C58-C110, and C113-C120. An N-linked (GlcNAc...) asparagine glycan is attached at N33. Residues 131–169 form a disordered region; the sequence is APQASSSSKDPPSQPLTSTSTPTPGASRRSSHPLPIKTS. Residues S138 and S143 are each glycosylated (O-linked (GalNAc...) serine). A compositionally biased stretch (low complexity) spans 145 to 158; the sequence is PLTSTSTPTPGASR. An O-linked (GalNAc...) threonine glycan is attached at T147. The O-linked (GalNAc...) serine glycan is linked to S148. T149 carries O-linked (GalNAc...) threonine glycosylation. O-linked (GalNAc...) serine glycosylation occurs at S150. T151 and T153 each carry an O-linked (GalNAc...) threonine glycan. Residues S157, S160, S161, and S169 are each glycosylated (O-linked (GalNAc...) serine).

The protein belongs to the glycoprotein hormones subunit beta family. In terms of assembly, heterodimer of a common alpha chain and a unique beta chain which confers biological specificity to thyrotropin, lutropin, follitropin and gonadotropin. Microheterogeneity at Asn-33. O-glycosylation appears to be responsible for the beta subunit contribution to the difference in LH-receptor binding activity between LSH-B and CG-B.

It localises to the secreted. Its function is as follows. Promotes spermatogenesis and ovulation by stimulating the testes and ovaries to synthesize steroids. The chain is Lutropin/choriogonadotropin subunit beta (LHB) from Equus caballus (Horse).